The chain runs to 177 residues: Small ribosomal subunit protein uS4 (177 aa).

The S4 RNA-binding domain maps to 104–166 (RRLQTIVYKK…PTSPFKQHPP (63 aa)). Residues 158–177 (TSPFKQHPPTQQGEENVQQA) form a disordered region. Over residues 165 to 177 (PPTQQGEENVQQA) the composition is skewed to polar residues.

Belongs to the universal ribosomal protein uS4 family. As to quaternary structure, part of the 30S ribosomal subunit. Contacts protein S5. The interaction surface between S4 and S5 is involved in control of translational fidelity.

In terms of biological role, one of the primary rRNA binding proteins, it binds directly to 16S rRNA where it nucleates assembly of the body of the 30S subunit. With S5 and S12 plays an important role in translational accuracy. The sequence is that of Small ribosomal subunit protein uS4 from Sulfurisphaera tokodaii (strain DSM 16993 / JCM 10545 / NBRC 100140 / 7) (Sulfolobus tokodaii).